A 408-amino-acid chain; its full sequence is LL-diaminopimelate aminotransferase (408 aa).

Positions 15 and 42 each coordinate substrate. Residues Tyr-72, 108 to 109 (SK), Tyr-132, Asn-187, Tyr-218, and 246 to 248 (SFS) contribute to the pyridoxal 5'-phosphate site. Positions 109, 132, and 187 each coordinate substrate. Lys-249 carries the N6-(pyridoxal phosphate)lysine modification. Pyridoxal 5'-phosphate contacts are provided by Arg-257 and Asn-292. Substrate contacts are provided by Asn-292 and Arg-388.

The protein belongs to the class-I pyridoxal-phosphate-dependent aminotransferase family. LL-diaminopimelate aminotransferase subfamily. Homodimer. Pyridoxal 5'-phosphate serves as cofactor.

The enzyme catalyses (2S,6S)-2,6-diaminopimelate + 2-oxoglutarate = (S)-2,3,4,5-tetrahydrodipicolinate + L-glutamate + H2O + H(+). It participates in amino-acid biosynthesis; L-lysine biosynthesis via DAP pathway; LL-2,6-diaminopimelate from (S)-tetrahydrodipicolinate (aminotransferase route): step 1/1. In terms of biological role, involved in the synthesis of meso-diaminopimelate (m-DAP or DL-DAP), required for both lysine and peptidoglycan biosynthesis. Catalyzes the direct conversion of tetrahydrodipicolinate to LL-diaminopimelate. The sequence is that of LL-diaminopimelate aminotransferase from Synechococcus sp. (strain CC9902).